The following is a 164-amino-acid chain: Transcription antitermination protein NusB (164 aa).

The protein belongs to the NusB family.

Involved in transcription antitermination. Required for transcription of ribosomal RNA (rRNA) genes. Binds specifically to the boxA antiterminator sequence of the ribosomal RNA (rrn) operons. In Mycolicibacterium gilvum (strain PYR-GCK) (Mycobacterium gilvum (strain PYR-GCK)), this protein is Transcription antitermination protein NusB.